A 174-amino-acid chain; its full sequence is NADH-quinone oxidoreductase subunit B 1 (174 aa).

Residues C38, C39, C104, and C133 each contribute to the [4Fe-4S] cluster site.

Belongs to the complex I 20 kDa subunit family. In terms of assembly, NDH-1 is composed of 14 different subunits. Subunits NuoB, C, D, E, F, and G constitute the peripheral sector of the complex. It depends on [4Fe-4S] cluster as a cofactor.

The protein localises to the cell membrane. The catalysed reaction is a quinone + NADH + 5 H(+)(in) = a quinol + NAD(+) + 4 H(+)(out). In terms of biological role, NDH-1 shuttles electrons from NADH, via FMN and iron-sulfur (Fe-S) centers, to quinones in the respiratory chain. The immediate electron acceptor for the enzyme in this species is believed to be ubiquinone. Couples the redox reaction to proton translocation (for every two electrons transferred, four hydrogen ions are translocated across the cytoplasmic membrane), and thus conserves the redox energy in a proton gradient. This Chloroflexus aggregans (strain MD-66 / DSM 9485) protein is NADH-quinone oxidoreductase subunit B 1.